We begin with the raw amino-acid sequence, 506 residues long: Nucleoside import ATP-binding protein NupA (506 aa).

ABC transporter domains are found at residues 7–242 (IQMI…VGRS) and 259–503 (LEIK…VGGN). 39 to 46 (GENGAGKS) contacts ATP.

The protein belongs to the ABC transporter superfamily. In terms of assembly, the complex is composed of two ATP-binding proteins (NupA), two transmembrane proteins (NupB and NupC) and a solute-binding protein (BmpA).

The protein localises to the cell membrane. Functionally, part of an ABC transporter complex involved in the uptake of all common nucleosides. Responsible for energy coupling to the transport system. The sequence is that of Nucleoside import ATP-binding protein NupA from Lactococcus lactis subsp. cremoris (strain MG1363).